The chain runs to 467 residues: 26S proteasome regulatory subunit 7 homolog (467 aa).

Disordered stretches follow at residues 1–26 (MPPK…DDKI) and 108–140 (GNGE…DEDD). Low complexity predominate over residues 117-134 (TDNNNSGNSNSNSNQQST). Residues serine 164 and serine 231 each carry the phosphoserine modification. An ATP-binding site is contributed by 250–257 (GPPGTGKT).

This sequence belongs to the AAA ATPase family. In terms of assembly, interacts with UBR1 and CIC1. In terms of processing, the N-terminus is blocked.

The protein localises to the cytoplasm. It localises to the nucleus. Functionally, the 26S proteasome is involved in the ATP-dependent degradation of ubiquitinated proteins. The regulatory (or ATPase) complex confers ATP dependency and substrate specificity to the 26S complex. In Saccharomyces cerevisiae (strain ATCC 204508 / S288c) (Baker's yeast), this protein is 26S proteasome regulatory subunit 7 homolog (RPT1).